Consider the following 266-residue polypeptide: MDNILRVIILGFVQGISEFLPISSSGHLLLLKKFMNIDLPIVFDIYLHFATVLVVIIYYRRRILELVMVFIKFILRKSKMTELDSSNLNLILLILIITFFTALIGIFIEKFKVLFTFKLVLFNFIVTSILLFLIEFRIKIFNFKKNIFFSGLLIGIMQGIGAMPGISRSGITIFASILLGFSRTKSLEISFLSLIPIVFGSLFLKYNDLFKSDIIFNIFEINLGAIFAFIFGLFSISLFVKMLKNSKLYYFSIYLVSVVSLVYFLV.

Helical transmembrane passes span 4-24 (ILRV…PISS), 39-59 (LPIV…IIYY), 88-108 (LNLI…GIFI), 114-134 (LFTF…LFLI), 147-167 (IFFS…PGIS), 186-206 (SLEI…FLKY), 214-234 (IIFN…FGLF), and 246-266 (SKLY…YFLV).

Belongs to the UppP family.

It is found in the cell inner membrane. The catalysed reaction is di-trans,octa-cis-undecaprenyl diphosphate + H2O = di-trans,octa-cis-undecaprenyl phosphate + phosphate + H(+). Its function is as follows. Catalyzes the dephosphorylation of undecaprenyl diphosphate (UPP). Confers resistance to bacitracin. This is Undecaprenyl-diphosphatase from Borrelia recurrentis (strain A1).